Consider the following 32-residue polypeptide: Photosystem I reaction center subunit XII (32 aa).

Residues 10 to 27 form a helical membrane-spanning segment; sequence VVALVSAFVTGILALRLG.

This sequence belongs to the PsaM family.

It is found in the plastid. Its subcellular location is the chloroplast thylakoid membrane. The chain is Photosystem I reaction center subunit XII from Staurastrum punctulatum (Green alga).